Reading from the N-terminus, the 353-residue chain is MTAILERRESESLWGRFCNWITSTENRLYIGWFGVLMIPTLLTATSVFIIAFIAAPPVDIDGIREPVSGSLLYGNNIISGAIIPTSAAIGLHFYPIWEAASVDEWLYNGGPYELIVLHFLLGVACYMGREWELSFRLGMRPWIAVAYSAPVAAATAVFLIYPIGQGSFSDGMPLGISGTFNFMIVFQAEHNILMHPFHMLGVAGVFGGSLFSAMHGSLVTSSLIRETTENESANEGYRFGQEEETYNIVAAHGYFGRLIFQYASFNNSRSLHFFLAAWPVVGIWFTALGISTMAFNLNGFNFNQSVVDSQGRVINTWADIINRANLGMEVMHERNAHNFPLDLAAVEVPSING.

At Thr2 the chain carries N-acetylthreonine. Thr2 is modified (phosphothreonine). Helical transmembrane passes span Tyr29–Ser46, His118–Leu133, and Trp142–Ala156. His118 serves as a coordination point for chlorophyll a. Tyr126 lines the pheophytin a pocket. 2 residues coordinate [CaMn4O5] cluster: Asp170 and Glu189. Residues Phe197–Leu218 traverse the membrane as a helical segment. His198 contributes to the chlorophyll a binding site. A quinone contacts are provided by residues His215 and Ser264–Phe265. His215 provides a ligand contact to Fe cation. Residue His272 participates in Fe cation binding. The chain crosses the membrane as a helical span at residues Phe274–Leu288. His332, Glu333, Asp342, and Ala344 together coordinate [CaMn4O5] cluster. The propeptide occupies Ala345–Gly353.

Belongs to the reaction center PufL/M/PsbA/D family. In terms of assembly, PSII is composed of 1 copy each of membrane proteins PsbA, PsbB, PsbC, PsbD, PsbE, PsbF, PsbH, PsbI, PsbJ, PsbK, PsbL, PsbM, PsbT, PsbX, PsbY, PsbZ, Psb30/Ycf12, at least 3 peripheral proteins of the oxygen-evolving complex and a large number of cofactors. It forms dimeric complexes. It depends on The D1/D2 heterodimer binds P680, chlorophylls that are the primary electron donor of PSII, and subsequent electron acceptors. It shares a non-heme iron and each subunit binds pheophytin, quinone, additional chlorophylls, carotenoids and lipids. D1 provides most of the ligands for the Mn4-Ca-O5 cluster of the oxygen-evolving complex (OEC). There is also a Cl(-1) ion associated with D1 and D2, which is required for oxygen evolution. The PSII complex binds additional chlorophylls, carotenoids and specific lipids. as a cofactor. In terms of processing, tyr-161 forms a radical intermediate that is referred to as redox-active TyrZ, YZ or Y-Z. C-terminally processed by CTPA; processing is essential to allow assembly of the oxygen-evolving complex and thus photosynthetic growth.

Its subcellular location is the plastid. It is found in the chloroplast thylakoid membrane. The enzyme catalyses 2 a plastoquinone + 4 hnu + 2 H2O = 2 a plastoquinol + O2. In terms of biological role, photosystem II (PSII) is a light-driven water:plastoquinone oxidoreductase that uses light energy to abstract electrons from H(2)O, generating O(2) and a proton gradient subsequently used for ATP formation. It consists of a core antenna complex that captures photons, and an electron transfer chain that converts photonic excitation into a charge separation. The D1/D2 (PsbA/PsbD) reaction center heterodimer binds P680, the primary electron donor of PSII as well as several subsequent electron acceptors. This Cucumis sativus (Cucumber) protein is Photosystem II protein D1.